The sequence spans 119 residues: Putative mating-type protein A2 (119 aa).

Residues 38–100 (KPYRGHRFTK…NRRRKEKTIT (63 aa)) constitute a DNA-binding region (homeobox; TALE-type).

Belongs to the TALE/M-ATYP homeobox family.

It is found in the nucleus. Functionally, probably not a functional protein. Cells lacking A2 show no obvious alterations in mating, sporulation and cell growth. The sequence is that of Putative mating-type protein A2 (MATA2) from Saccharomyces cerevisiae (Baker's yeast).